Consider the following 151-residue polypeptide: UPF0735 ACT domain-containing protein SSP1116 (151 aa).

In terms of domain architecture, ACT spans 74 to 149 (TLILYVNDIV…HVSKVELISM (76 aa)).

It belongs to the UPF0735 family.

The protein is UPF0735 ACT domain-containing protein SSP1116 of Staphylococcus saprophyticus subsp. saprophyticus (strain ATCC 15305 / DSM 20229 / NCIMB 8711 / NCTC 7292 / S-41).